Here is a 584-residue protein sequence, read N- to C-terminus: Protein FAM117B (584 aa).

The disordered stretch occupies residues 1 to 214; the sequence is MSQRVRRNGS…SSSSSIIRRT (214 aa). The residue at position 10 (Ser-10) is a Phosphoserine. Residues 53–79 show a composition bias toward gly residues; sequence TRGGGGGGNNGGNGGASGPSGGGGSGG. The segment covering 80–90 has biased composition (low complexity); that stretch reads PRTASRSTSPT. Ser-102 is subject to Phosphoserine. Residues 114–132 show a composition bias toward low complexity; sequence TSTRGTSPTRGTAPGARSS. The span at 133–142 shows a compositional bias: pro residues; sequence PPRPQPPPPL. Positions 145–154 are enriched in polar residues; sequence TVSSPSSSPT. The span at 204 to 214 shows a compositional bias: low complexity; it reads SSSSSSIIRRT. A phosphoserine mark is found at Ser-206, Ser-215, Ser-216, and Ser-268. Disordered regions lie at residues 227-461 and 551-584; these read GHWP…SYMF and STNTEQERVSRGTSTVLPSASLHAPPEPIEEAEG. Positions 287 to 297 are enriched in basic residues; it reads RSKHSSRHHRD. Ser-340 is subject to Phosphoserine. Positions 350–361 are enriched in basic and acidic residues; it reads IIIKETGEKEEQ. The segment covering 379 to 392 has biased composition (polar residues); the sequence is QRSSSTRSIDTQTP. Ser-386 bears the Phosphoserine mark. Over residues 399–412 the composition is skewed to low complexity; sequence SNNSSRSQSVSPTS. Ser-444 and Ser-452 each carry phosphoserine.

The protein is Protein FAM117B (Fam117b) of Mus musculus (Mouse).